A 152-amino-acid polypeptide reads, in one-letter code: Large ribosomal subunit protein uL13 (152 aa).

The protein belongs to the universal ribosomal protein uL13 family. In terms of assembly, part of the 50S ribosomal subunit.

This protein is one of the early assembly proteins of the 50S ribosomal subunit, although it is not seen to bind rRNA by itself. It is important during the early stages of 50S assembly. The protein is Large ribosomal subunit protein uL13 of Wolbachia pipientis wMel.